The chain runs to 365 residues: UDP-N-acetylglucosamine--N-acetylmuramyl-(pentapeptide) pyrophosphoryl-undecaprenol N-acetylglucosamine transferase (365 aa).

UDP-N-acetyl-alpha-D-glucosamine is bound by residues threonine 12–glycine 14, asparagine 123, arginine 166, serine 194, and glutamine 295.

The protein belongs to the glycosyltransferase 28 family. MurG subfamily.

It is found in the cell inner membrane. It carries out the reaction di-trans,octa-cis-undecaprenyl diphospho-N-acetyl-alpha-D-muramoyl-L-alanyl-D-glutamyl-meso-2,6-diaminopimeloyl-D-alanyl-D-alanine + UDP-N-acetyl-alpha-D-glucosamine = di-trans,octa-cis-undecaprenyl diphospho-[N-acetyl-alpha-D-glucosaminyl-(1-&gt;4)]-N-acetyl-alpha-D-muramoyl-L-alanyl-D-glutamyl-meso-2,6-diaminopimeloyl-D-alanyl-D-alanine + UDP + H(+). It participates in cell wall biogenesis; peptidoglycan biosynthesis. Its function is as follows. Cell wall formation. Catalyzes the transfer of a GlcNAc subunit on undecaprenyl-pyrophosphoryl-MurNAc-pentapeptide (lipid intermediate I) to form undecaprenyl-pyrophosphoryl-MurNAc-(pentapeptide)GlcNAc (lipid intermediate II). The chain is UDP-N-acetylglucosamine--N-acetylmuramyl-(pentapeptide) pyrophosphoryl-undecaprenol N-acetylglucosamine transferase from Phenylobacterium zucineum (strain HLK1).